The chain runs to 221 residues: MSSSETQKMQLYSFSLSSCAWRVRIALHLKGLDFEYKAVDLFKGEHLTPEFLKLNPLGYVPVLVHGDIVIADSLAIIMYLEEKFPENPLLPQDLQKRALNYQAANIVTSNIQPLQNLAVLNYIEEKLGSDEKLSWAKHHIKKGFSALEKLLKGHAGKYATGDEVGLADLFLAPQIIASITGFGMDMAEFPLLKSLNDAYLKYQHFRMRCQRISPMLDEAKS.

The GST N-terminal domain maps to 7 to 88; the sequence is QKMQLYSFSL…YLEEKFPENP (82 aa). Residues 17 to 22, Val-60, 72 to 73, Gln-112, and 116 to 118 each bind glutathione; these read SSCAWR, DS, and NLA. The GST C-terminal domain maps to 93-221; sequence DLQKRALNYQ…ISPMLDEAKS (129 aa).

Belongs to the GST superfamily. Zeta family.

The catalysed reaction is RX + glutathione = an S-substituted glutathione + a halide anion + H(+). In terms of biological role, conjugation of reduced glutathione to a wide number of exogenous and endogenous hydrophobic electrophiles. In Dianthus caryophyllus (Carnation), this protein is Glutathione S-transferase 1 (GST1).